Here is a 123-residue protein sequence, read N- to C-terminus: MADLAKIEEQLSSLTLMQAAELVKMLEEKWGVSAAAPVAVAAAAAPAAEAAAEKTDFEVVLASSGDKKVEVIKVVKEITGLGLIEAKKLVDEAPKPIKSNVKKAEAEEIKSKLEAAGAKVELK.

Belongs to the bacterial ribosomal protein bL12 family. Homodimer. Part of the ribosomal stalk of the 50S ribosomal subunit. Forms a multimeric L10(L12)X complex, where L10 forms an elongated spine to which 2 to 4 L12 dimers bind in a sequential fashion. Binds GTP-bound translation factors.

Functionally, forms part of the ribosomal stalk which helps the ribosome interact with GTP-bound translation factors. Is thus essential for accurate translation. This chain is Large ribosomal subunit protein bL12, found in Rickettsia bellii (strain OSU 85-389).